We begin with the raw amino-acid sequence, 103 residues long: MKKILLACSSGMSTSLLVTKMKEYAQSIGEEAEIWAVGQDKAKEDMRKADAVLIGPQMSFLKSELQKEADQYNIQVEVIDMMAYGMADGKKAYEQALSLMVNQ.

The PTS EIIB type-3 domain maps to methionine 1 to glutamine 103. The active-site Phosphocysteine intermediate is the cysteine 8. The residue at position 8 (cysteine 8) is a Phosphocysteine; by EIIA.

The protein resides in the cytoplasm. The enzyme catalyses D-cellobiose(out) + N(pros)-phospho-L-histidyl-[protein] = 6-phospho-beta-D-glucosyl-(1-&gt;4)-D-glucose(in) + L-histidyl-[protein]. The phosphoenolpyruvate-dependent sugar phosphotransferase system (sugar PTS), a major carbohydrate active transport system, catalyzes the phosphorylation of incoming sugar substrates concomitantly with their translocation across the cell membrane. The enzyme II GmuABC PTS system is involved in the transport of oligo-glucomannans such as cellobiose or mannobiose. In Bacillus subtilis (strain 168), this protein is PTS system oligo-beta-mannoside-specific EIIB component.